Consider the following 82-residue polypeptide: uncharacterized protein (82 aa).

A run of 3 helical transmembrane segments spans residues 4–26 (IAVLFIVFGFPIVAGVFGIAGHF), 31–50 (FWVAPLIVLITSLILLVTLA), and 55–77 (SFIFWVVMYTAIALVTSVATLFL).

The protein resides in the cell membrane. This is an uncharacterized protein from Bacillus subtilis (strain 168).